The following is a 66-amino-acid chain: ATP synthase subunit c (66 aa).

Transmembrane regions (helical) follow at residues leucine 3–methionine 23 and phenylalanine 45–isoleucine 65.

It belongs to the ATPase C chain family. In terms of assembly, F-type ATPases have 2 components, F(1) - the catalytic core - and F(0) - the membrane proton channel. F(1) has five subunits: alpha(3), beta(3), gamma(1), delta(1), epsilon(1). F(0) has three main subunits: a(1), b(2) and c(10-14). The alpha and beta chains form an alternating ring which encloses part of the gamma chain. F(1) is attached to F(0) by a central stalk formed by the gamma and epsilon chains, while a peripheral stalk is formed by the delta and b chains.

The protein localises to the cell membrane. In terms of biological role, f(1)F(0) ATP synthase produces ATP from ADP in the presence of a proton or sodium gradient. F-type ATPases consist of two structural domains, F(1) containing the extramembraneous catalytic core and F(0) containing the membrane proton channel, linked together by a central stalk and a peripheral stalk. During catalysis, ATP synthesis in the catalytic domain of F(1) is coupled via a rotary mechanism of the central stalk subunits to proton translocation. Key component of the F(0) channel; it plays a direct role in translocation across the membrane. A homomeric c-ring of between 10-14 subunits forms the central stalk rotor element with the F(1) delta and epsilon subunits. The protein is ATP synthase subunit c of Streptococcus pneumoniae serotype 19F (strain G54).